The chain runs to 1089 residues: Probable transport protein MmpL8 (1089 aa).

The disordered stretch occupies residues 1 to 26; the sequence is MCDVLMQPVRTPRPSTNLRSKPLRPT. The next 12 membrane-spanning stretches (helical) occupy residues 44–64, 222–242, 257–277, 316–336, 349–369, 400–420, 555–575, 874–894, 898–918, 930–950, 973–993, and 996–1016; these read WVVI…VPSL, ITIL…TMVL, LVAI…IFMS, IGKV…GMVF, LGIS…ALMV, KTHL…AGLA, AIST…LLGG, IIAM…RAIV, YLIG…VIVF, IPGL…MLLI, GGVI…LVFA, and GSVV…TFLV. The disordered stretch occupies residues 1056-1078; it reads RTKRKPLLPKEEEEQSPPDDDDL. The segment covering 1066–1078 has biased composition (acidic residues); the sequence is EEEEQSPPDDDDL.

The protein belongs to the resistance-nodulation-cell division (RND) (TC 2.A.6) family. MmpL subfamily.

It is found in the cell membrane. The protein is Probable transport protein MmpL8 (mmpL8) of Mycobacterium bovis (strain ATCC BAA-935 / AF2122/97).